The primary structure comprises 564 residues: Proline--tRNA ligase (564 aa).

It belongs to the class-II aminoacyl-tRNA synthetase family. ProS type 1 subfamily. Homodimer.

Its subcellular location is the cytoplasm. It catalyses the reaction tRNA(Pro) + L-proline + ATP = L-prolyl-tRNA(Pro) + AMP + diphosphate. Functionally, catalyzes the attachment of proline to tRNA(Pro) in a two-step reaction: proline is first activated by ATP to form Pro-AMP and then transferred to the acceptor end of tRNA(Pro). As ProRS can inadvertently accommodate and process non-cognate amino acids such as alanine and cysteine, to avoid such errors it has two additional distinct editing activities against alanine. One activity is designated as 'pretransfer' editing and involves the tRNA(Pro)-independent hydrolysis of activated Ala-AMP. The other activity is designated 'posttransfer' editing and involves deacylation of mischarged Ala-tRNA(Pro). The misacylated Cys-tRNA(Pro) is not edited by ProRS. The sequence is that of Proline--tRNA ligase from Xanthomonas campestris pv. campestris (strain 8004).